The following is a 251-amino-acid chain: uncharacterized protein (251 aa).

Residues 192–238 (CMMCVQRGDERVAITTPYTTDCGHTYCYACIMSRLKLVNNVSCPICK) form an RING-type zinc finger.

It is found in the cytoplasm. This is an uncharacterized protein from Schizosaccharomyces pombe (strain 972 / ATCC 24843) (Fission yeast).